Consider the following 443-residue polypeptide: MDPLNLSWYDDDPESRNWSRPFNGSEGKVGKPHYNYYAMLLTLLIFVIVFGNVLVCMAVSREKALQTTTNYLIVSLAVADLLVATLVMPWVVYLEVVGEWKFSRIHCDIFVTLDVMMCTASILNLCAISIDRYTAVAMPMLYNTRYSSKRRVTVMIAIVWVLSFTISCPLLFGLNNTDQNECIIANPAFVVYSSVVSFYVPFIVTLLVYIKIYIVLRRRRKRVNTKRSSRAFRANLKAPLKGNYTHPEDMKLCTVIMKSNGSFPVNRRRVEAARRAQELEMEMLSSTSPPERTRYSPIPPSHHQLTLPDPSHHGLHSTANSPVKPEKNGHAKDHPKIAKIFEIQSMPNGKTRTSLKTMSRRKLSQQKEKKATQMLAIVLGVFIICWLPFFITHILNIHCDCNIPPVLYSAFTWLGYVNSAVNPIIYTTFNVEFRKAFMKILHC.

The Extracellular portion of the chain corresponds to 1–37 (MDPLNLSWYDDDPESRNWSRPFNGSEGKVGKPHYNYY). Residues Asn5, Asn17, and Asn23 are each glycosylated (N-linked (GlcNAc...) asparagine). The chain crosses the membrane as a helical span at residues 38 to 60 (AMLLTLLIFVIVFGNVLVCMAVS). The Cytoplasmic portion of the chain corresponds to 61-70 (REKALQTTTN). A helical membrane pass occupies residues 71 to 93 (YLIVSLAVADLLVATLVMPWVVY). The Extracellular segment spans residues 94–108 (LEVVGEWKFSRIHCD). Cys107 and Cys182 are oxidised to a cystine. The helical transmembrane segment at 109-130 (IFVTLDVMMCTASILNLCAISI) threads the bilayer. Residues 131 to 151 (DRYTAVAMPMLYNTRYSSKRR) lie on the Cytoplasmic side of the membrane. A helical membrane pass occupies residues 152–172 (VTVMIAIVWVLSFTISCPLLF). The Extracellular portion of the chain corresponds to 173-188 (GLNNTDQNECIIANPA). A helical transmembrane segment spans residues 189–213 (FVVYSSVVSFYVPFIVTLLVYIKIY). The interaction with PPP1R9B stretch occupies residues 211–373 (KIYIVLRRRR…SQQKEKKATQ (163 aa)). The Cytoplasmic portion of the chain corresponds to 214 to 373 (IVLRRRRKRV…SQQKEKKATQ (160 aa)). Residues 282–331 (EMLSSTSPPERTRYSPIPPSHHQLTLPDPSHHGLHSTANSPVKPEKNGHA) are disordered. The helical transmembrane segment at 374–395 (MLAIVLGVFIICWLPFFITHIL) threads the bilayer. At 396 to 409 (NIHCDCNIPPVLYS) the chain is on the extracellular side. Cysteines 399 and 401 form a disulfide. A helical transmembrane segment spans residues 410–431 (AFTWLGYVNSAVNPIIYTTFNV). Residues 432–443 (EFRKAFMKILHC) lie on the Cytoplasmic side of the membrane. Residue Cys443 is the site of S-palmitoyl cysteine attachment.

It belongs to the G-protein coupled receptor 1 family. Forms homo- and heterooligomers with DRD4. The interaction with DRD4 may modulate agonist-induced downstream signaling. Interacts with CADPS and CADPS2. Interacts with GPRASP1, PPP1R9B and CLIC6. Interacts with ARRB2. Interacts with HTR2A. Interacts with DRD1. Interacts with KCNA2. Palmitoylated. Palmitoylation which is required for proper localization to the plasma membrane and stability of the receptor could be carried on by ZDHHC4, ZDHHC3 and ZDHHC8.

It is found in the cell membrane. It localises to the golgi apparatus membrane. Functionally, dopamine receptor whose activity is mediated by G proteins which inhibit adenylyl cyclase. Positively regulates postnatal regression of retinal hyaloid vessels via suppression of VEGFR2/KDR activity, downstream of OPN5. This chain is D(2) dopamine receptor (DRD2), found in Mustela putorius furo (European domestic ferret).